We begin with the raw amino-acid sequence, 447 residues long: Cobyrinate a,c-diamide synthase (447 aa).

The 188-residue stretch at 252–439 (KIAVAFDESF…AHQHCIGNPY (188 aa)) folds into the GATase cobBQ-type domain. The active-site Nucleophile is the cysteine 331.

It belongs to the CobB/CbiA family. Requires Mg(2+) as cofactor.

It carries out the reaction cob(II)yrinate + 2 L-glutamine + 2 ATP + 2 H2O = cob(II)yrinate a,c diamide + 2 L-glutamate + 2 ADP + 2 phosphate + 2 H(+). The enzyme catalyses Ni-sirohydrochlorin + 2 L-glutamine + 2 ATP + 2 H2O = Ni-sirohydrochlorin a,c-diamide + 2 L-glutamate + 2 ADP + 2 phosphate + 2 H(+). It participates in cofactor biosynthesis; adenosylcobalamin biosynthesis; cob(II)yrinate a,c-diamide from sirohydrochlorin (anaerobic route): step 10/10. Its function is as follows. Catalyzes the ATP-dependent amidation of the two carboxylate groups at positions a and c of cobyrinate, using either L-glutamine or ammonia as the nitrogen source. Involved in the biosynthesis of the unique nickel-containing tetrapyrrole coenzyme F430, the prosthetic group of methyl-coenzyme M reductase (MCR), which plays a key role in methanogenesis and anaerobic methane oxidation. Catalyzes the ATP-dependent amidation of the two carboxylate groups at positions a and c of Ni-sirohydrochlorin, using L-glutamine or ammonia as the nitrogen source. This is Cobyrinate a,c-diamide synthase from Methanococcus maripaludis (strain C5 / ATCC BAA-1333).